A 234-amino-acid chain; its full sequence is UPF0502 protein Bphyt_5265 (234 aa).

It belongs to the UPF0502 family.

The chain is UPF0502 protein Bphyt_5265 from Paraburkholderia phytofirmans (strain DSM 17436 / LMG 22146 / PsJN) (Burkholderia phytofirmans).